The chain runs to 347 residues: Transcription termination/antitermination protein NusA (347 aa).

An S1 motif domain is found at 112 to 184 (GEIVAGVIQR…REPLITLSRT (73 aa)). Positions 287-347 (ARAARVVVPD…GVSRGMAHDR (61 aa)) constitute a KH domain. Residues 322–347 (DIRGDAPPPPPGQPEPGVSRGMAHDR) form a disordered region.

The protein belongs to the NusA family. As to quaternary structure, monomer. Binds directly to the core enzyme of the DNA-dependent RNA polymerase and to nascent RNA.

Its subcellular location is the cytoplasm. Its function is as follows. Participates in both transcription termination and antitermination. The protein is Transcription termination/antitermination protein NusA of Mycobacterium bovis (strain ATCC BAA-935 / AF2122/97).